The chain runs to 869 residues: H(+)/Cl(-) exchange transporter 6 (869 aa).

At 1–80 (MAGCRGSLCC…KKGRWYEVVK (80 aa)) the chain is on the cytoplasmic side. Helical transmembrane passes span 81–113 (WTVV…FGVV) and 128–150 (LSLL…LVLI). The short motif at 156 to 160 (GSGIP) is the Selectivity filter part_1 element. Chloride is bound at residue serine 157. An intramembrane region (helical) is located at residues 159 to 166 (IPEIKCYL). 2 consecutive transmembrane segments (helical) span residues 176-194 (RLRT…VAGG) and 200-217 (EGPM…LPQF). Positions 198-202 (GKEGP) match the Selectivity filter part_2 motif. Intramembrane regions (helical) lie at residues 241-253 (FVSA…IAAA) and 257-265 (PIGATLFSL). The next 3 helical transmembrane spans lie at 277–294 (TWKV…LNFF), 335–364 (GFFV…YRMR), and 371–392 (KLVR…VFVA). Asparagine 410, asparagine 422, and asparagine 432 each carry an N-linked (GlcNAc...) asparagine glycan. Helical transmembrane passes span 462–481 (PITL…WTYG) and 487–511 (GLFV…KSYI). Residues 487–491 (GLFVP) carry the Selectivity filter part_3 motif. Phenylalanine 489 serves as a coordination point for chloride. The segment at residues 519 to 533 (GTFSLIGAAALLGGV) is an intramembrane region (helical). Positions 534-536 (VRM) form an intramembrane region, note=Loop between two helices. The helical intramembrane region spans 537–548 (TISLTVILIEST). An intramembrane region (note=Loop between two helices) is located at residues 549-552 (NEIT). A helical membrane pass occupies residues 553 to 571 (YGLPIMITLMVAKWTGDFF). Over 572-869 (NKGIYDIHVG…ARLRQHYQTI (298 aa)) the chain is Cytoplasmic. Position 576 (tyrosine 576) interacts with chloride. A CBS 1 domain is found at 605 to 662 (MEPNLTYVYPHTRIQSLVSILRTTVHHAFPVVTENRGNEKEFMKGNQLISNNIKFKKS). Position 630 to 632 (630 to 632 (HHA)) interacts with ATP. The segment at 668–687 (AGEQRRRSQSMKSYPSSELR) is disordered. Residues 677-686 (SMKSYPSSEL) are compositionally biased toward polar residues. Position 773 is a phosphoserine (serine 773). One can recognise a CBS 2 domain in the interval 807–868 (MNPSPFTVSP…QARLRQHYQT (62 aa)). 849 to 852 (TRHN) lines the ATP pocket.

This sequence belongs to the chloride channel (TC 2.A.49) family. ClC-6/CLCN6 subfamily. N-glycosylated on several asparagine residues.

It localises to the late endosome membrane. It carries out the reaction 2 chloride(in) + H(+)(out) = 2 chloride(out) + H(+)(in). In terms of biological role, voltage-gated channel mediating the exchange of chloride ions against protons. Functions as antiporter and contributes to the acidification of the late endosome lumen. The CLC channel family contains both chloride channels and proton-coupled anion transporters that exchange chloride or another anion for protons. The presence of conserved gating glutamate residues is typical for family members that function as antiporters. This Oryctolagus cuniculus (Rabbit) protein is H(+)/Cl(-) exchange transporter 6 (CLCN6).